A 70-amino-acid polypeptide reads, in one-letter code: MFTLKKSLLLLFFLGTISLSLCEQERSAEDEGEVIEEEVKRGFMDTAKNVAKNVAVTLLDKLKCKITGGC.

The N-terminal stretch at 1 to 22 (MFTLKKSLLLLFFLGTISLSLC) is a signal peptide. Positions 23 to 39 (EQERSAEDEGEVIEEEV) are cleaved as a propeptide — removed in mature form. C64 and C70 are oxidised to a cystine.

Expressed by the skin glands.

It localises to the secreted. Functionally, has antimicrobial activity against Gram-negative bacterium E.coli ATCC 8739 (MIC=100 ug), against Gram positive bacteria S.aureus ATCC 6538 (MIC=25 ug), methicillin-resistant S.aureus ATCC 43300 (MIC=100 ug), B.subtilis ATCC 6633 (MIC=12.5 ug) and against fungus C.albicans ATCC 90028 (MIC=100 ug). This chain is Palustrin-2ISa, found in Odorrana ishikawae (Ishikawa's frog).